The chain runs to 699 residues: MNPSEMQRKAPPRRRRHRNRAPLTHKMNKMVTSEEQMKLPSTKKAEPPTWAQLKKLTQLATKYLENTKVTQTPESMLLAALMIVSMVVSLPMPAGAAAANYTYWAYVPFPPLIRAVTWMDNPIEVYVNDSVWVPGPTDDHCPAKPEEEGMMINISIGYRYPPICLGRAPGCLMPAVQNWLVEVPTVSPISRFTYHMVSGMSLRPRVNYLQDFSYQRSFKFRPKGKPCPKEIPKESKNTEVLVWEECVANSAVILQNNEFGTIIDWAPRGQFYHNCSGQTQSCPSAQVSPAVDSDLTESLDKHKHKKLQSFYPWEWGEKGISTPRPKIISPVSGPEHPELWRLTVASHHIRIWSGNQTLETRDRKPFYTVDLNSSLTVPLQSCIKPPYMLVVGNIVIKPDSQTITCENCRLLTCIDSTFNWQHRILLVRAREGVWIPVSMDRPWEASPSIHTLTEVLKGVLNRSKRFIFTLIAVIMGLIAVTATAAVAGVALHSSVQSVNFVNDWQKNSTRLWNSQSSIDQKLANQINDLRQTVIWMGDRLMSLEHRFQLQCDWNTSDFSITPQIYNESEHHWDMVRRHLQGREDNLTLDISKLKEQIFEASKAHLNLVPGTEAIAGVADGLANLNPVTWVKTIGSTTIINLILILVCLFCLLLVCRCTQQLRRDSDHRERAMMTMAVLSKRKGGNVGKSKRDQIVTVSV.

Positions 1-47 (MNPSEMQRKAPPRRRRHRNRAPLTHKMNKMVTSEEQMKLPSTKKAEP) are disordered. A signal peptide spans 1–89 (MNPSEMQRKA…ALMIVSMVVS (89 aa)). The span at 10-20 (APPRRRRHRNR) shows a compositional bias: basic residues. The Extracellular segment spans residues 90–632 (LPMPAGAAAA…NLNPVTWVKT (543 aa)). Residues Asn100, Asn128, Asn153, Asn274, Asn355, Asn372, and Asn461 are each glycosylated (N-linked (GlcNAc...) asparagine). The tract at residues 466–486 (FIFTLIAVIMGLIAVTATAAV) is fusion peptide. N-linked (GlcNAc...) asparagine glycans are attached at residues Asn507, Asn554, Asn566, and Asn585. Residues 633–653 (IGSTTIINLILILVCLFCLLL) form a helical membrane-spanning segment. Residues 654–699 (VCRCTQQLRRDSDHRERAMMTMAVLSKRKGGNVGKSKRDQIVTVSV) lie on the Cytoplasmic side of the membrane.

The protein belongs to the beta type-B retroviral envelope protein family. HERV class-II K(HML-2) env subfamily. As to quaternary structure, the surface (SU) and transmembrane (TM) proteins form a heterodimer. SU and TM are attached by noncovalent interactions or by a labile interchain disulfide bond. Post-translationally, specific enzymatic cleavages in vivo yield the mature SU and TM proteins.

The protein localises to the cell membrane. Its subcellular location is the virion. In terms of biological role, retroviral envelope proteins mediate receptor recognition and membrane fusion during early infection. Endogenous envelope proteins may have kept, lost or modified their original function during evolution. This endogenous envelope protein has lost its original fusogenic properties. Its function is as follows. SU mediates receptor recognition. Functionally, TM anchors the envelope heterodimer to the viral membrane through one transmembrane domain. The other hydrophobic domain, called fusion peptide, mediates fusion of the viral membrane with the target cell membrane. In Homo sapiens (Human), this protein is Endogenous retrovirus group K member 113 Env polyprotein (HERVK_113).